The sequence spans 155 residues: Altered inheritance rate of mitochondria protein 29 (155 aa).

Serine 78 is modified (phosphoserine).

It belongs to the UPF0538 family.

It localises to the cytoplasm. Functionally, may be involved in mitochondrial organization and biogenesis. The protein is Altered inheritance rate of mitochondria protein 29 (AIM29) of Saccharomyces cerevisiae (strain ATCC 204508 / S288c) (Baker's yeast).